The chain runs to 548 residues: Probable malate:quinone oxidoreductase (548 aa).

The protein belongs to the MQO family. The cofactor is FAD.

It catalyses the reaction (S)-malate + a quinone = a quinol + oxaloacetate. It participates in carbohydrate metabolism; tricarboxylic acid cycle; oxaloacetate from (S)-malate (quinone route): step 1/1. The polypeptide is Probable malate:quinone oxidoreductase (Escherichia coli O6:K15:H31 (strain 536 / UPEC)).